We begin with the raw amino-acid sequence, 1284 residues long: MMKEKSISASKASLVFFLCQMISALDVPLDSKLLEELSQPPTITQQSPKDYIVDPRENIVIQCEAKGKPPPSFSWTRNGTHFDIDKDAQVTMKPNSGTLVVNIMNGVKAEAYEGVYQCTARNERGAAISNNIVIRPSRSPLWTKEKLEPNHVREGDSLVLNCRPPVGLPPPIIFWMDNAFQRLPQSERVSQGLNGDLYFSNVQPEDTRVDYICYARFNHTQTIQQKQPISVKVFSTKPVTERPPVLLTPMGSTSNKVELRGNVLLLECIAAGLPTPVIRWIKEGGELPANRTFFENFKKTLKIIDVSEADSGNYKCTARNTLGSTHHVISVTVKAAPYWITAPRNLVLSPGEDGTLICRANGNPKPSISWLTNGVPIAIAPEDPSRKVDGDTIIFSAVQERSSAVYQCNASNEYGYLLANAFVNVLAEPPRILTPANKLYQVIADSPALIDCAYFGSPKPEIEWFRGVKGSILRGNEYVFHDNGTLEIPVAQKDSTGTYTCVARNKLGKTQNEVQLEVKDPTMIIKQPQYKVIQRSAQASFECVIKHDPTLIPTVIWLKDNNELPDDERFLVGKDNLTIMNVTDKDDGTYTCIVNTTLDSVSASAVLTVVAAPPTPAIIYARPNPPLDLELTGQLERSIELSWVPGEENNSPITNFVIEYEDGLHEPGVWHYQTEVPGSHTTVQLKLSPYVNYSFRVIAVNEIGRSQPSEPSEQYLTKSANPDENPSNVQGIGSEPDNLVITWESLKGFQSNGPGLQYKVSWRQKDVDDEWTSVVVANVSKYIVSGTPTFVPYEIKVQALNDLGYAPEPSEVIGHSGEDLPMVAPGNVQVHVINSTLAKVHWDPVPLKSVRGHLQGYKVYYWKVQSLSRRSKRHVEKKILTFRGNKTFGMLPGLEPYSSYKLNVRVVNGKGEGPASPDKVFKTPEGVPSPPSFLKITNPTLDSLTLEWGSPTHPNGVLTSYILKFQPINNTHELGPLVEIRIPANESSLILKNLNYSTRYKFYFNAQTSVGSGSQITEEAVTIMDEAGILRPAVGAGKVQPLYPRIRNVTTAAAETYANISWEYEGPDHANFYVEYGVAGSKEDWKKEIVNGSRSFFVLKGLTPGTAYKVRVGAEGLSGFRSSEDLFETGPAMASRQVDIATQGWFIGLMCAVALLILILLIVCFIRRNKGGKYPVKEKEDAHADPEIQPMKEDDGTFGEYRSLESDAEDHKPLKKGSRTPSDRTVKKEDSDDSLVDYGEGVNGQFNEDGSFIGQYSGKKEKEPAEGNESSEAPSPVNAMNSFV.

Positions 1–24 (MMKEKSISASKASLVFFLCQMISA) are cleaved as a signal peptide. The Extracellular portion of the chain corresponds to 25–1143 (LDVPLDSKLL…ASRQVDIATQ (1119 aa)). Ig-like C2-type domains are found at residues 41 to 129 (PTIT…AAIS), 136 to 230 (PSRS…QPIS), 243 to 332 (PPVL…ISVT), 337 to 424 (PYWI…AFVN), 430 to 517 (PRIL…VQLE), and 521 to 608 (PTMI…AVLT). Intrachain disulfides connect Cys63/Cys118 and Cys162/Cys213. Asn78 carries N-linked (GlcNAc...) asparagine glycosylation. Residues Asn218 and Asn290 are each glycosylated (N-linked (GlcNAc...) asparagine). 2 disulfides stabilise this stretch: Cys268/Cys316 and Cys358/Cys408. 6 N-linked (GlcNAc...) asparagine glycosylation sites follow: Asn409, Asn483, Asn576, Asn581, Asn595, and Asn692. 2 disulfides stabilise this stretch: Cys452/Cys501 and Cys543/Cys592. Fibronectin type-III domains are found at residues 625–720 (PPLD…TKSA), 725–819 (NPSN…SGED), 824–926 (APGN…TPEG), 930–1026 (PPSF…IMDE), and 1040–1132 (QPLY…TGPA). Residues 707–731 (QPSEPSEQYLTKSANPDENPSNVQG) are compositionally biased toward polar residues. A disordered region spans residues 707–732 (QPSEPSEQYLTKSANPDENPSNVQGI). N-linked (GlcNAc...) asparagine glycans are attached at residues Asn778, Asn834, Asn885, Asn969, Asn985, Asn995, Asn1048, Asn1059, and Asn1091. Residues 1144–1166 (GWFIGLMCAVALLILILLIVCFI) traverse the membrane as a helical segment. Over 1167–1284 (RRNKGGKYPV…SPVNAMNSFV (118 aa)) the chain is Cytoplasmic. 3 stretches are compositionally biased toward basic and acidic residues: residues 1175 to 1195 (PVKEKEDAHADPEIQPMKEDD), 1202 to 1212 (RSLESDAEDHK), and 1221 to 1230 (PSDRTVKKED). A disordered region spans residues 1175–1284 (PVKEKEDAHA…SPVNAMNSFV (110 aa)). A compositionally biased stretch (polar residues) spans 1268–1284 (NESSEAPSPVNAMNSFV).

The protein belongs to the immunoglobulin superfamily. L1/neurofascin/NgCAM family. Heterodimer of an alpha and a beta chain. As to expression, retina and developing brain.

It is found in the cell membrane. This protein is a cell adhesion molecule involved in neuron-neuron adhesion, neurite fasciculation, outgrowth of neurites, etc. Specifically involved in the development of optic fibres in the retina. The chain is Neuronal cell adhesion molecule from Gallus gallus (Chicken).